Here is a 172-residue protein sequence, read N- to C-terminus: 3-hydroxydecanoyl-[acyl-carrier-protein] dehydratase (172 aa).

The active site involves H71.

Belongs to the thioester dehydratase family. FabA subfamily. As to quaternary structure, homodimer.

The protein resides in the cytoplasm. The enzyme catalyses a (3R)-hydroxyacyl-[ACP] = a (2E)-enoyl-[ACP] + H2O. It catalyses the reaction (3R)-hydroxydecanoyl-[ACP] = (2E)-decenoyl-[ACP] + H2O. It carries out the reaction (2E)-decenoyl-[ACP] = (3Z)-decenoyl-[ACP]. Its pathway is lipid metabolism; fatty acid biosynthesis. Necessary for the introduction of cis unsaturation into fatty acids. Catalyzes the dehydration of (3R)-3-hydroxydecanoyl-ACP to E-(2)-decenoyl-ACP and then its isomerization to Z-(3)-decenoyl-ACP. Can catalyze the dehydratase reaction for beta-hydroxyacyl-ACPs with saturated chain lengths up to 16:0, being most active on intermediate chain length. The protein is 3-hydroxydecanoyl-[acyl-carrier-protein] dehydratase of Aliivibrio salmonicida (strain LFI1238) (Vibrio salmonicida (strain LFI1238)).